The primary structure comprises 376 residues: MSCPVIELAQQLISRPSVSPDDQGCQQLIIERLTPLGFTIEKMPFGQTENLWACRGGEGETLAFAGHTDVVPPGANALWDNPPFEPSIRDGMLYGRGAADMKGSLAAMVVAAERFVHAYPQHRGRLAFLITSDEEADAHDGTVKVVESLISRGERLDYCLVGEPSSQHQLGDMIKNGRRGSITANVTIYGTQGHVAYPHLAQNPIHMASPFIHELVNTVWDNGNEYFPATTMQIANIHSGTGSNNVIPGELFIQFNFRFSTAITDEEIRQRTEALLQKYQLRYHISWSLSGQPFITGEGKLLDAVRYSVKHYTNIEPTLSTSGGTSDGRFIAQMGAQVVELGPINATIHKVNECVSAADLQQLSRIYQRIMEQIIL.

His67 lines the Zn(2+) pocket. The active site involves Asp69. Asp100 contributes to the Zn(2+) binding site. Glu134 acts as the Proton acceptor in catalysis. Glu135, Glu163, and His349 together coordinate Zn(2+).

It belongs to the peptidase M20A family. DapE subfamily. Homodimer. The cofactor is Zn(2+). It depends on Co(2+) as a cofactor.

The catalysed reaction is N-succinyl-(2S,6S)-2,6-diaminopimelate + H2O = (2S,6S)-2,6-diaminopimelate + succinate. Its pathway is amino-acid biosynthesis; L-lysine biosynthesis via DAP pathway; LL-2,6-diaminopimelate from (S)-tetrahydrodipicolinate (succinylase route): step 3/3. Catalyzes the hydrolysis of N-succinyl-L,L-diaminopimelic acid (SDAP), forming succinate and LL-2,6-diaminopimelate (DAP), an intermediate involved in the bacterial biosynthesis of lysine and meso-diaminopimelic acid, an essential component of bacterial cell walls. In Proteus mirabilis (strain HI4320), this protein is Succinyl-diaminopimelate desuccinylase.